A 50-amino-acid chain; its full sequence is ATP synthase protein 8 (50 aa).

The helical transmembrane segment at 13–32 (ITFTFIILAITVYILSKYIL) threads the bilayer.

The protein belongs to the ATPase protein 8 family. As to quaternary structure, F-type ATPases have 2 components, CF(1) - the catalytic core - and CF(0) - the membrane proton channel.

It is found in the mitochondrion membrane. Mitochondrial membrane ATP synthase (F(1)F(0) ATP synthase or Complex V) produces ATP from ADP in the presence of a proton gradient across the membrane which is generated by electron transport complexes of the respiratory chain. F-type ATPases consist of two structural domains, F(1) - containing the extramembraneous catalytic core and F(0) - containing the membrane proton channel, linked together by a central stalk and a peripheral stalk. During catalysis, ATP synthesis in the catalytic domain of F(1) is coupled via a rotary mechanism of the central stalk subunits to proton translocation. Part of the complex F(0) domain. Minor subunit located with subunit a in the membrane. The protein is ATP synthase protein 8 (ATP8) of Podospora anserina (strain S / ATCC MYA-4624 / DSM 980 / FGSC 10383) (Pleurage anserina).